The primary structure comprises 527 residues: Bifunctional purine biosynthesis protein PurH (527 aa).

The MGS-like domain maps to 1–149; sequence MASDFLPVHR…KNFARVAVAT (149 aa).

This sequence belongs to the PurH family.

It carries out the reaction (6R)-10-formyltetrahydrofolate + 5-amino-1-(5-phospho-beta-D-ribosyl)imidazole-4-carboxamide = 5-formamido-1-(5-phospho-D-ribosyl)imidazole-4-carboxamide + (6S)-5,6,7,8-tetrahydrofolate. The enzyme catalyses IMP + H2O = 5-formamido-1-(5-phospho-D-ribosyl)imidazole-4-carboxamide. It participates in purine metabolism; IMP biosynthesis via de novo pathway; 5-formamido-1-(5-phospho-D-ribosyl)imidazole-4-carboxamide from 5-amino-1-(5-phospho-D-ribosyl)imidazole-4-carboxamide (10-formyl THF route): step 1/1. It functions in the pathway purine metabolism; IMP biosynthesis via de novo pathway; IMP from 5-formamido-1-(5-phospho-D-ribosyl)imidazole-4-carboxamide: step 1/1. This is Bifunctional purine biosynthesis protein PurH from Xylella fastidiosa (strain 9a5c).